A 184-amino-acid chain; its full sequence is Ribosome maturation factor RimM (184 aa).

Residues 101–174 (PDEYYDHQLV…RVVIADRPGL (74 aa)) form the PRC barrel domain.

Belongs to the RimM family. In terms of assembly, binds ribosomal protein uS19.

The protein resides in the cytoplasm. In terms of biological role, an accessory protein needed during the final step in the assembly of 30S ribosomal subunit, possibly for assembly of the head region. Essential for efficient processing of 16S rRNA. May be needed both before and after RbfA during the maturation of 16S rRNA. It has affinity for free ribosomal 30S subunits but not for 70S ribosomes. The sequence is that of Ribosome maturation factor RimM from Nocardioides sp. (strain ATCC BAA-499 / JS614).